A 109-amino-acid chain; its full sequence is DNA-directed RNA polymerase subunit I (109 aa).

It catalyses the reaction RNA(n) + a ribonucleoside 5'-triphosphate = RNA(n+1) + diphosphate. DNA-dependent RNA polymerase catalyzes the transcription of DNA into RNA using the four ribonucleoside triphosphates as substrates. This Methanocaldococcus jannaschii (strain ATCC 43067 / DSM 2661 / JAL-1 / JCM 10045 / NBRC 100440) (Methanococcus jannaschii) protein is DNA-directed RNA polymerase subunit I (rpoI).